A 332-amino-acid polypeptide reads, in one-letter code: MKVTFEELKGAFYRVLRSRNIAEDTADKCAEMFARTTESGVYSHGVNRFPRFIQQLDNGDIIPDAKPQRVTSLGAIEQWDAQRAIGNLTAKKMMDRAIELASDHGIGLVALRNANHWMRGGSYGWQAAEKGYIGICWTNSIAVMPPWGAKECRIGTNPLIVAIPSTPITMVDMSMSMFSYGMLEVNRLAGRELPVDGGFDDNGQLTKEPGVIEKNRRILPMGYWKGSGLSIVLDMIATLLSNGSSVAEVTQENSDEYGVSQIFIAIEVDKLIDGATRDAKLQRIMDFITTAERADDNVAIRLPGHEFTKLLDDNRRHGITIDDSVWAKIQAL.

His44 (proton donor) is an active-site residue. NAD(+)-binding positions include 168-174 (ITMVDMS), 224-225 (WK), and 304-306 (GHE).

Belongs to the LDH2/MDH2 oxidoreductase family. DlgD subfamily. As to quaternary structure, homodimer.

The protein resides in the cytoplasm. It catalyses the reaction 3-dehydro-L-gulonate + NAD(+) = 2,3-dioxo-L-gulonate + NADH + H(+). The catalysed reaction is 3-dehydro-L-gulonate + NADP(+) = 2,3-dioxo-L-gulonate + NADPH + H(+). Catalyzes the reduction of 2,3-diketo-L-gulonate in the presence of NADH, to form 3-keto-L-gulonate. The protein is 2,3-diketo-L-gulonate reductase of Salmonella newport (strain SL254).